Consider the following 107-residue polypeptide: Thioredoxin (107 aa).

Residues 2–107 form the Thioredoxin domain; that stretch reads SEVLHINDAD…QLANFINQHI (106 aa). The cysteines at positions 32 and 35 are disulfide-linked.

It belongs to the thioredoxin family.

Its function is as follows. Participates in various redox reactions through the reversible oxidation of its active center dithiol to a disulfide and catalyzes dithiol-disulfide exchange reactions. This is Thioredoxin (trxA) from Haemophilus influenzae (strain ATCC 51907 / DSM 11121 / KW20 / Rd).